The following is a 392-amino-acid chain: ATP phosphoribosyltransferase regulatory subunit (392 aa).

Belongs to the class-II aminoacyl-tRNA synthetase family. HisZ subfamily. Heteromultimer composed of HisG and HisZ subunits.

The protein localises to the cytoplasm. It functions in the pathway amino-acid biosynthesis; L-histidine biosynthesis; L-histidine from 5-phospho-alpha-D-ribose 1-diphosphate: step 1/9. Its function is as follows. Required for the first step of histidine biosynthesis. May allow the feedback regulation of ATP phosphoribosyltransferase activity by histidine. The protein is ATP phosphoribosyltransferase regulatory subunit of Prochlorococcus marinus (strain MIT 9313).